A 222-amino-acid chain; its full sequence is MALELADYERKARESVMAFWGNREKARQKQQESGKPDQGERRRDRRKNMDGFCALVIDIIRANGLHRAEIHQKRALLTLPGYFRPTKLWDLLVIQDRRLVAALEFKSQVGPSFGNNFNNRTEEAIGTAHDLWTAYREGAFGQSPRPFVGWLMLVEDAPESNQRRADTSPHFRCSRSSRAHPTYGGMTSSASGSSRSSFTPRPRSSPRRAPPPRQGRIPSPRI.

Disordered regions lie at residues 21 to 45 (GNRE…RRDR) and 161 to 222 (NQRR…SPRI). The segment covering 22–42 (NREKARQKQQESGKPDQGERR) has biased composition (basic and acidic residues). Low complexity predominate over residues 188–202 (SSASGSSRSSFTPRP).

This sequence belongs to the XhoI type II restriction endonuclease family.

It catalyses the reaction Endonucleolytic cleavage of DNA to give specific double-stranded fragments with terminal 5'-phosphates.. In terms of biological role, a P subtype restriction enzyme that recognizes the double-stranded sequence 5'-CTCGAG-3' and cleaves after C-1. This Azospirillum brasilense protein is Type II restriction enzyme AbrI (abrIR).